Here is a 337-residue protein sequence, read N- to C-terminus: Junctional sarcoplasmic reticulum protein 1 (337 aa).

Residues 1–84 (MATRAMEELD…EKEPVSKVTS (84 aa)) form a mediates interaction with CACNA1S region. Disordered regions lie at residues 23-125 (SALA…ELPW) and 159-337 (EAPA…KGRD). Composition is skewed to basic and acidic residues over residues 49 to 59 (SRSHDSQERVT) and 69 to 79 (TKPKKMEKEPV). Residues 165-180 (PESWASSSSSPKGPAS) show a composition bias toward low complexity. Basic and acidic residues predominate over residues 199 to 213 (SKLEERVQIPRSEEA). The span at 214–225 (AEKDEWESEEAA) shows a compositional bias: acidic residues. Composition is skewed to basic and acidic residues over residues 236-277 (GPKE…RGAR), 285-309 (RRWE…DRKR), and 316-325 (RRPDEEDRPL). A compositionally biased stretch (basic residues) spans 326–337 (GRQKRRAGKGRD).

In terms of assembly, interacts with CACNA1S, CACNB1 and calsequestrin.

The protein resides in the sarcoplasmic reticulum membrane. It is found in the endoplasmic reticulum membrane. Functionally, involved in skeletal muscle excitation/contraction coupling (EC), probably acting as a regulator of the voltage-sensitive calcium channel CACNA1S. EC is a physiological process whereby an electrical signal (depolarization of the plasma membrane) is converted into a chemical signal, a calcium gradient, by the opening of ryanodine receptor calcium release channels. May regulate CACNA1S membrane targeting and activity. The protein is Junctional sarcoplasmic reticulum protein 1 (JSRP1) of Bos taurus (Bovine).